The chain runs to 381 residues: Chaperone protein DnaJ (381 aa).

Positions 5 to 70 constitute a J domain; the sequence is DFYEVLGVGR…QKKAAYDQYG (66 aa). The CR-type zinc finger occupies 136 to 214; it reads GCSKEIEVPT…CHGQGRKQKT (79 aa). Zn(2+) is bound by residues Cys-149, Cys-152, Cys-166, Cys-169, Cys-188, Cys-191, Cys-202, and Cys-205. CXXCXGXG motif repeat units lie at residues 149-156, 166-173, 188-195, and 202-209; these read CDACDGSG, CGTCHGHG, CPTCHGKG, and CNVCHGQG.

Belongs to the DnaJ family. As to quaternary structure, homodimer. Zn(2+) serves as cofactor.

The protein localises to the cytoplasm. Its function is as follows. Participates actively in the response to hyperosmotic and heat shock by preventing the aggregation of stress-denatured proteins and by disaggregating proteins, also in an autonomous, DnaK-independent fashion. Unfolded proteins bind initially to DnaJ; upon interaction with the DnaJ-bound protein, DnaK hydrolyzes its bound ATP, resulting in the formation of a stable complex. GrpE releases ADP from DnaK; ATP binding to DnaK triggers the release of the substrate protein, thus completing the reaction cycle. Several rounds of ATP-dependent interactions between DnaJ, DnaK and GrpE are required for fully efficient folding. Also involved, together with DnaK and GrpE, in the DNA replication of plasmids through activation of initiation proteins. This chain is Chaperone protein DnaJ, found in Vibrio cholerae serotype O1 (strain ATCC 39541 / Classical Ogawa 395 / O395).